We begin with the raw amino-acid sequence, 393 residues long: Formate-dependent phosphoribosylglycinamide formyltransferase (393 aa).

N(1)-(5-phospho-beta-D-ribosyl)glycinamide is bound by residues 22 to 23 (EL) and Glu-82. ATP-binding positions include Arg-114, Lys-155, 160–165 (SSGKGQ), 195–198 (EGLV), and Glu-203. Positions 119 to 308 (RLAAETLQLP…EFALHVRAFL (190 aa)) constitute an ATP-grasp domain. Glu-267 and Glu-279 together coordinate Mg(2+). N(1)-(5-phospho-beta-D-ribosyl)glycinamide contacts are provided by residues Asp-286, Lys-355, and 362–363 (RR).

Belongs to the PurK/PurT family. In terms of assembly, homodimer.

The enzyme catalyses N(1)-(5-phospho-beta-D-ribosyl)glycinamide + formate + ATP = N(2)-formyl-N(1)-(5-phospho-beta-D-ribosyl)glycinamide + ADP + phosphate + H(+). The protein operates within purine metabolism; IMP biosynthesis via de novo pathway; N(2)-formyl-N(1)-(5-phospho-D-ribosyl)glycinamide from N(1)-(5-phospho-D-ribosyl)glycinamide (formate route): step 1/1. Its function is as follows. Involved in the de novo purine biosynthesis. Catalyzes the transfer of formate to 5-phospho-ribosyl-glycinamide (GAR), producing 5-phospho-ribosyl-N-formylglycinamide (FGAR). Formate is provided by PurU via hydrolysis of 10-formyl-tetrahydrofolate. The sequence is that of Formate-dependent phosphoribosylglycinamide formyltransferase from Yersinia pseudotuberculosis serotype IB (strain PB1/+).